The primary structure comprises 175 residues: Short chain dehydrogenase/reductase dpmpG (175 aa).

Residues I18, D71, N98, and K132 each contribute to the NADP(+) site.

Belongs to the short-chain dehydrogenases/reductases (SDR) family.

It participates in secondary metabolite biosynthesis; terpenoid biosynthesis. Short chain dehydrogenase/reductase; part of the gene cluster that mediates the biosynthesis of diterpenoid pyrones. The first step of the pathway is the synthesis of the alpha-pyrone moiety by the polyketide synthase dpmpA via condensation of one acetyl-CoA starter unit with 3 malonyl-CoA units and 2 methylations. The alpha-pyrone is then combined with geranylgeranyl pyrophosphate (GGPP) formed by the GGPP synthase dpmpD through the action of the prenyltransferase dpmpC to yield a linear alpha-pyrone diterpenoid. Subsequent steps in the diterpenoid pyrone biosynthetic pathway involve the decalin core formation, which is initiated by the epoxidation of the C10-C11 olefin by the FAD-dependent oxidoreductase dpmpE, and is followed by a cyclization cascade catalyzed by the terpene cyclase dpmpB. The short chain dehydrogenase/reductase dpmpG then oxidizes the 8S hydroxy group to a ketone and the short chain dehydrogenase/reductase dpmpH reduces the ketone to the 8R hydroxy group to yield higginsianin B. Higginsianin B is further methylated by the methyltransferase dpmpI to produce the intermediate named FDDP B. The cytochrome P450 monooxygenase dpmpJ then oxidizes the C-26 methyl to primary alcohol, producing the final diterpenoid pyrone with a C-26 primary alcohol on the gamma-pyrone moiety named FDDP C. The sequence is that of Short chain dehydrogenase/reductase dpmpG from Macrophomina phaseolina (strain MS6) (Charcoal rot fungus).